A 345-amino-acid chain; its full sequence is UDP-3-O-acylglucosamine N-acyltransferase (345 aa).

His237 serves as the catalytic Proton acceptor.

Belongs to the transferase hexapeptide repeat family. LpxD subfamily. Homotrimer.

The enzyme catalyses a UDP-3-O-[(3R)-3-hydroxyacyl]-alpha-D-glucosamine + a (3R)-hydroxyacyl-[ACP] = a UDP-2-N,3-O-bis[(3R)-3-hydroxyacyl]-alpha-D-glucosamine + holo-[ACP] + H(+). Its pathway is bacterial outer membrane biogenesis; LPS lipid A biosynthesis. Functionally, catalyzes the N-acylation of UDP-3-O-acylglucosamine using 3-hydroxyacyl-ACP as the acyl donor. Is involved in the biosynthesis of lipid A, a phosphorylated glycolipid that anchors the lipopolysaccharide to the outer membrane of the cell. The sequence is that of UDP-3-O-acylglucosamine N-acyltransferase from Geobacter sp. (strain M21).